The sequence spans 378 residues: MLNIYRSVLFPIIFSGLKADPEWAHHQVLNMLSFIDTHSDSQLVNSIRTTMEKLFCFKDTRLEQNLWELNFKNPVGLAPGYDKDGQAINMWPQLGFGFAELGTVTFHQQPGNAQPRLFRLPKDKAVLNRMGFNNKGAAALAKKFQIQNKKNSFFFPYGVNIGKSKITPLEAAATDYLESFRLLKNCGDYFVVNVSSPNTPGLRSLQNTDSLSKILEVLPRENERKKPILVKIAPDLENEAIAAIIDLIKEYKISGIIATNTTINREKLTTKILPATGKPIIEEAGGISGKPLTKRSTEIIKFIWQETKGKLPIIGVGGIFTSEDAWNKITAGASLIQIYTGLVYQGPGIVKQILQGLLKKLDEHGLNSISEAVGLANK.

FMN is bound by residues 79–83 and threonine 103; that span reads PGYDK. Substrate is bound at residue lysine 83. 128-132 is a binding site for substrate; it reads NRMGF. FMN-binding residues include asparagine 160 and asparagine 193. Asparagine 193 is a substrate binding site. Catalysis depends on serine 196, which acts as the Nucleophile. Residue asparagine 198 participates in substrate binding. 2 residues coordinate FMN: lysine 231 and threonine 259. Position 260 to 261 (260 to 261) interacts with substrate; it reads NT. Residues glycine 289, glycine 318, and 339-340 each bind FMN; that span reads YT.

Belongs to the dihydroorotate dehydrogenase family. Type 2 subfamily. In terms of assembly, monomer. The cofactor is FMN.

Its subcellular location is the cell membrane. It carries out the reaction (S)-dihydroorotate + a quinone = orotate + a quinol. It functions in the pathway pyrimidine metabolism; UMP biosynthesis via de novo pathway; orotate from (S)-dihydroorotate (quinone route): step 1/1. Functionally, catalyzes the conversion of dihydroorotate to orotate with quinone as electron acceptor. This is Dihydroorotate dehydrogenase (quinone) from Trichodesmium erythraeum (strain IMS101).